Consider the following 237-residue polypeptide: Ribose-5-phosphate isomerase A (237 aa).

Substrate contacts are provided by residues 29-32 (SGST), 86-89 (DGAD), and 99-102 (KGGG). Residue Glu-108 is the Proton acceptor of the active site. Lys-126 is a binding site for substrate.

It belongs to the ribose 5-phosphate isomerase family. In terms of assembly, homodimer.

The catalysed reaction is aldehydo-D-ribose 5-phosphate = D-ribulose 5-phosphate. The protein operates within carbohydrate degradation; pentose phosphate pathway; D-ribose 5-phosphate from D-ribulose 5-phosphate (non-oxidative stage): step 1/1. In terms of biological role, catalyzes the reversible conversion of ribose-5-phosphate to ribulose 5-phosphate. The sequence is that of Ribose-5-phosphate isomerase A from Prochlorococcus marinus (strain MIT 9312).